A 226-amino-acid polypeptide reads, in one-letter code: 7-cyano-7-deazaguanine synthase (226 aa).

Position 10–20 (10–20 (LSGGLDSATAA)) interacts with ATP. Zn(2+)-binding residues include C191, C199, C202, and C205.

Belongs to the QueC family. Zn(2+) serves as cofactor.

The catalysed reaction is 7-carboxy-7-deazaguanine + NH4(+) + ATP = 7-cyano-7-deazaguanine + ADP + phosphate + H2O + H(+). The protein operates within purine metabolism; 7-cyano-7-deazaguanine biosynthesis. In terms of biological role, catalyzes the ATP-dependent conversion of 7-carboxy-7-deazaguanine (CDG) to 7-cyano-7-deazaguanine (preQ(0)). This chain is 7-cyano-7-deazaguanine synthase, found in Prochlorococcus marinus (strain MIT 9303).